The following is a 338-amino-acid chain: CRISPR-associated endonuclease Cas1 (338 aa).

Mn(2+) contacts are provided by Glu155, His220, and Glu235.

The protein belongs to the CRISPR-associated endonuclease Cas1 family. As to quaternary structure, homodimer, forms a heterotetramer with a Cas2 homodimer. Mg(2+) is required as a cofactor. The cofactor is Mn(2+).

Functionally, CRISPR (clustered regularly interspaced short palindromic repeat), is an adaptive immune system that provides protection against mobile genetic elements (viruses, transposable elements and conjugative plasmids). CRISPR clusters contain spacers, sequences complementary to antecedent mobile elements, and target invading nucleic acids. CRISPR clusters are transcribed and processed into CRISPR RNA (crRNA). Acts as a dsDNA endonuclease. Involved in the integration of spacer DNA into the CRISPR cassette. The type III-A Csm effector complex binds crRNA and acts as a crRNA-guided RNase, DNase and cyclic oligoadenylate synthase; binding of target RNA cognate to the crRNA is required for all activities. The protein is CRISPR-associated endonuclease Cas1 of Mycobacterium tuberculosis (strain CDC 1551 / Oshkosh).